Consider the following 367-residue polypeptide: 3-dehydroquinate synthase (367 aa).

NAD(+) is bound by residues 112–116 (GVIGD), 136–137 (TT), lysine 149, lysine 158, and 176–179 (TLKT). Residues glutamate 191, histidine 256, and histidine 273 each contribute to the Zn(2+) site.

Belongs to the sugar phosphate cyclases superfamily. Dehydroquinate synthase family. NAD(+) serves as cofactor. Co(2+) is required as a cofactor. The cofactor is Zn(2+).

Its subcellular location is the cytoplasm. The enzyme catalyses 7-phospho-2-dehydro-3-deoxy-D-arabino-heptonate = 3-dehydroquinate + phosphate. It functions in the pathway metabolic intermediate biosynthesis; chorismate biosynthesis; chorismate from D-erythrose 4-phosphate and phosphoenolpyruvate: step 2/7. Catalyzes the conversion of 3-deoxy-D-arabino-heptulosonate 7-phosphate (DAHP) to dehydroquinate (DHQ). The polypeptide is 3-dehydroquinate synthase (Prochlorococcus marinus (strain SARG / CCMP1375 / SS120)).